A 328-amino-acid polypeptide reads, in one-letter code: Renalase (328 aa).

FAD contacts are provided by residues Ala-13, 32-33, Arg-40, and 56-57; these read DK and QY. Substrate contacts are provided by residues 57 to 61 and 96 to 98; these read YFTAR and SPD. Position 128 (Ile-128) interacts with FAD. Thr-185 serves as a coordination point for substrate. Position 302 (Asp-302) interacts with FAD. Arg-308 contacts substrate. Val-309 is an FAD binding site.

This sequence belongs to the bacterial renalase family. Requires FAD as cofactor.

It carries out the reaction 1,2-dihydro-beta-NAD + O2 + H(+) = H2O2 + NAD(+). It catalyses the reaction 1,2-dihydro-beta-NADP + O2 + H(+) = H2O2 + NADP(+). The enzyme catalyses 1,6-dihydro-beta-NADP + O2 + H(+) = H2O2 + NADP(+). The catalysed reaction is 1,6-dihydro-beta-NAD + O2 + H(+) = H2O2 + NAD(+). In terms of biological role, catalyzes the oxidation of the 1,2-dihydro- and 1,6-dihydro- isomeric forms of beta-NAD(P) back to beta-NAD(P)+. Has a preference for 1,2-dihydro-beta-NAD as substrate. May serve to protect primary metabolism dehydrogenases from inhibition by the 1,2-dihydro- and 1,6-dihydro-beta-NAD(P) isomers. This chain is Renalase, found in Pseudomonas syringae pv. tomato (strain ATCC BAA-871 / DC3000).